A 410-amino-acid polypeptide reads, in one-letter code: Mating-type locus allele B7 protein (410 aa).

The variable domain between B alleles stretch occupies residues 1–110; that stretch reads MSSDPNFSLT…VNVGSPAVGC (110 aa). The segment at residues 107-184 is a DNA-binding region (homeobox; TALE-type); it reads AVGCRNLSED…NARRRSGWSH (78 aa). Residues 111–410 form a highly conserved between B alleles region; the sequence is RNLSEDLPAY…PFLCLSVAFV (300 aa). 3 disordered regions span residues 202–225, 278–336, and 374–394; these read RAKL…SNNL, TPKP…PELS, and ARGN…QPDE. The short motif at 276-308 is the Nuclear localization signal element; sequence KKTPKPGMPRPVTTVAKRQPARKTKPAAKPNSR. A compositionally biased stretch (polar residues) spans 306 to 336; it reads NSRTANPRASTTPSIDSTLDSSKLESTPELS. The tract at residues 333-410 is not essential for B7 function; sequence PELSMCSTAD…PFLCLSVAFV (78 aa). A compositionally biased stretch (basic residues) spans 375–388; it reads RGNRKVKALPKRAG.

The protein belongs to the TALE/M-ATYP homeobox family.

Its subcellular location is the nucleus. Functionally, the B locus has at least 25 alleles, and any combination of two different B alleles yields a multimeric regulatory protein, that activates genes responsible for the pathogenicity and for the sexual development of the fungus within the corn plant. This chain is Mating-type locus allele B7 protein, found in Mycosarcoma maydis (Corn smut fungus).